A 110-amino-acid chain; its full sequence is Nucleoid-associated protein PERMA_0533 (110 aa).

Belongs to the YbaB/EbfC family. Homodimer.

Its subcellular location is the cytoplasm. The protein localises to the nucleoid. Its function is as follows. Binds to DNA and alters its conformation. May be involved in regulation of gene expression, nucleoid organization and DNA protection. This Persephonella marina (strain DSM 14350 / EX-H1) protein is Nucleoid-associated protein PERMA_0533.